Consider the following 116-residue polypeptide: Iron-sulfur cluster insertion protein ErpA (116 aa).

Residues C44, C108, and C110 each coordinate iron-sulfur cluster.

Belongs to the HesB/IscA family. As to quaternary structure, homodimer. Iron-sulfur cluster is required as a cofactor.

Required for insertion of 4Fe-4S clusters for at least IspG. The protein is Iron-sulfur cluster insertion protein ErpA of Aeromonas hydrophila subsp. hydrophila (strain ATCC 7966 / DSM 30187 / BCRC 13018 / CCUG 14551 / JCM 1027 / KCTC 2358 / NCIMB 9240 / NCTC 8049).